The sequence spans 72 residues: U1-sicaritoxin-Sdo1a (72 aa).

The N-terminal stretch at 1-24 (MMKKFTCFLLCATILCAIFCVSVA) is a signal peptide. The propeptide occupies 25–41 (EKFHKMKSDIERDETPM). Intrachain disulfides connect C43–C61, C50–C64, and C60–C69.

In terms of tissue distribution, expressed by the venom gland.

The protein resides in the secreted. In Hexophthalma dolichocephala (Afrotropical spider), this protein is U1-sicaritoxin-Sdo1a.